Reading from the N-terminus, the 735-residue chain is Delta-1-pyrroline-5-carboxylate synthase 2 (735 aa).

A glutamate 5-kinase region spans residues 1-315 (MGRGGIGGAG…WGCSKEATAR (315 aa)). Substrate-binding residues include Ser-79, Asp-176, and Asn-195. Residues 215–216 (SD), 221–226 (YSGPPS), and 255–261 (RGGMQAK) contribute to the ATP site. A gamma-glutamyl phosphate reductase region spans residues 316–735 (EMAVAARDCS…VYTHRELPLQ (420 aa)).

This sequence in the N-terminal section; belongs to the glutamate 5-kinase family. In the C-terminal section; belongs to the gamma-glutamyl phosphate reductase family.

It catalyses the reaction L-glutamate + ATP = L-glutamyl 5-phosphate + ADP. It carries out the reaction L-glutamate 5-semialdehyde + phosphate + NADP(+) = L-glutamyl 5-phosphate + NADPH + H(+). It functions in the pathway amino-acid biosynthesis; L-proline biosynthesis; L-glutamate 5-semialdehyde from L-glutamate: step 1/2. The protein operates within amino-acid biosynthesis; L-proline biosynthesis; L-glutamate 5-semialdehyde from L-glutamate: step 2/2. Feedback regulated by proline. In terms of biological role, P5CS plays a key role in proline biosynthesis, leading to osmoregulation in plants. Involved in abiotic stress tolerance. This chain is Delta-1-pyrroline-5-carboxylate synthase 2, found in Oryza sativa subsp. japonica (Rice).